Reading from the N-terminus, the 283-residue chain is Putative pyruvate, phosphate dikinase regulatory protein (283 aa).

ADP is bound at residue 156-163 (GLSRAGKT).

The protein belongs to the pyruvate, phosphate/water dikinase regulatory protein family. PDRP subfamily.

The enzyme catalyses N(tele)-phospho-L-histidyl/L-threonyl-[pyruvate, phosphate dikinase] + ADP = N(tele)-phospho-L-histidyl/O-phospho-L-threonyl-[pyruvate, phosphate dikinase] + AMP + H(+). The catalysed reaction is N(tele)-phospho-L-histidyl/O-phospho-L-threonyl-[pyruvate, phosphate dikinase] + phosphate + H(+) = N(tele)-phospho-L-histidyl/L-threonyl-[pyruvate, phosphate dikinase] + diphosphate. Bifunctional serine/threonine kinase and phosphorylase involved in the regulation of the pyruvate, phosphate dikinase (PPDK) by catalyzing its phosphorylation/dephosphorylation. This Desulfotalea psychrophila (strain LSv54 / DSM 12343) protein is Putative pyruvate, phosphate dikinase regulatory protein.